We begin with the raw amino-acid sequence, 347 residues long: Phenylalanine--tRNA ligase alpha subunit (347 aa).

Glu-265 contacts Mg(2+).

The protein belongs to the class-II aminoacyl-tRNA synthetase family. Phe-tRNA synthetase alpha subunit type 1 subfamily. As to quaternary structure, tetramer of two alpha and two beta subunits. Mg(2+) serves as cofactor.

It is found in the cytoplasm. The enzyme catalyses tRNA(Phe) + L-phenylalanine + ATP = L-phenylalanyl-tRNA(Phe) + AMP + diphosphate + H(+). The chain is Phenylalanine--tRNA ligase alpha subunit from Mycolicibacterium paratuberculosis (strain ATCC BAA-968 / K-10) (Mycobacterium paratuberculosis).